The sequence spans 215 residues: LexA repressor (215 aa).

A DNA-binding region (H-T-H motif) is located at residues 28-48 (RAEIAAELGFSSPNAAEEHLR). Residues serine 133 and lysine 170 each act as for autocatalytic cleavage activity in the active site.

This sequence belongs to the peptidase S24 family. In terms of assembly, homodimer.

The enzyme catalyses Hydrolysis of Ala-|-Gly bond in repressor LexA.. Its function is as follows. Represses a number of genes involved in the response to DNA damage (SOS response), including recA and lexA. In the presence of single-stranded DNA, RecA interacts with LexA causing an autocatalytic cleavage which disrupts the DNA-binding part of LexA, leading to derepression of the SOS regulon and eventually DNA repair. This chain is LexA repressor, found in Burkholderia vietnamiensis (strain G4 / LMG 22486) (Burkholderia cepacia (strain R1808)).